We begin with the raw amino-acid sequence, 415 residues long: GPI mannosyltransferase 1 (415 aa).

9 helical membrane passes run 8 to 28, 82 to 102, 134 to 154, 158 to 178, 222 to 242, 284 to 304, 329 to 349, 354 to 374, and 387 to 407; these read PSLV…YGAW, FFSF…WLIA, TRGS…WAVL, ITLA…PFVY, LLLT…MYIL, FESL…PIVL, SQYF…SSLM, LGIT…QQGY, and GLFL…GIII.

It belongs to the PIGM family.

The protein resides in the endoplasmic reticulum membrane. It participates in glycolipid biosynthesis; glycosylphosphatidylinositol-anchor biosynthesis. In terms of biological role, mannosyltransferase involved in glycosylphosphatidylinositol-anchor biosynthesis. Transfers the first alpha-1,4-mannose to GlcN-acyl-PI during GPI precursor assembly. Required for cell wall integrity. The protein is GPI mannosyltransferase 1 (gpi14) of Aspergillus oryzae (strain ATCC 42149 / RIB 40) (Yellow koji mold).